Here is a 155-residue protein sequence, read N- to C-terminus: 6,7-dimethyl-8-ribityllumazine synthase (155 aa).

5-amino-6-(D-ribitylamino)uracil is bound by residues Phe-24, 58 to 60 (AFE), and 82 to 84 (AII). 87–88 (ST) is a binding site for (2S)-2-hydroxy-3-oxobutyl phosphate. His-90 (proton donor) is an active-site residue. 5-amino-6-(D-ribitylamino)uracil is bound at residue Phe-115. Arg-129 is a (2S)-2-hydroxy-3-oxobutyl phosphate binding site.

This sequence belongs to the DMRL synthase family.

The catalysed reaction is (2S)-2-hydroxy-3-oxobutyl phosphate + 5-amino-6-(D-ribitylamino)uracil = 6,7-dimethyl-8-(1-D-ribityl)lumazine + phosphate + 2 H2O + H(+). It participates in cofactor biosynthesis; riboflavin biosynthesis; riboflavin from 2-hydroxy-3-oxobutyl phosphate and 5-amino-6-(D-ribitylamino)uracil: step 1/2. Its function is as follows. Catalyzes the formation of 6,7-dimethyl-8-ribityllumazine by condensation of 5-amino-6-(D-ribitylamino)uracil with 3,4-dihydroxy-2-butanone 4-phosphate. This is the penultimate step in the biosynthesis of riboflavin. In Chlorobium phaeobacteroides (strain BS1), this protein is 6,7-dimethyl-8-ribityllumazine synthase.